Here is a 260-residue protein sequence, read N- to C-terminus: Snake venom serine protease homolog KN7 (260 aa).

A signal peptide spans 1–18 (MVLIRVLANLLILQLSYA). Residues 19-24 (QKSSEL) constitute a propeptide that is removed on maturation. The Peptidase S1 domain maps to 25 to 251 (IIGGDECNIN…HLDWIKSIIA (227 aa)). Cystine bridges form between Cys31/Cys165, Cys52/Cys68, Cys100/Cys258, Cys144/Cys212, Cys176/Cys191, and Cys202/Cys227. N-linked (GlcNAc...) asparagine glycans are attached at residues Asn83, Asn123, and Asn124.

It belongs to the peptidase S1 family. Snake venom subfamily. As to expression, expressed by the venom gland.

The protein localises to the secreted. Snake venom serine protease homolog that may act in the hemostasis system of the prey. This Trimeresurus stejnegeri (Chinese green tree viper) protein is Snake venom serine protease homolog KN7.